Consider the following 422-residue polypeptide: Protein king tubby 2 (422 aa).

The tract at residues 49–169 (PSNPDQIISS…ASGHNDAEGD (121 aa)) is disordered. Residues 57–81 (SSGSPTTVTATGTTTGSVTTTPTSP) are compositionally biased toward low complexity.

The protein belongs to the TUB family.

It is found in the cytoplasm. The protein localises to the nucleus. This Culex quinquefasciatus (Southern house mosquito) protein is Protein king tubby 2 (king-tubby2).